Consider the following 504-residue polypeptide: Maturase K (504 aa).

The protein belongs to the intron maturase 2 family. MatK subfamily.

The protein localises to the plastid. It localises to the chloroplast. Usually encoded in the trnK tRNA gene intron. Probably assists in splicing its own and other chloroplast group II introns. The protein is Maturase K of Guizotia abyssinica (Niger).